The sequence spans 215 residues: uncharacterized protein (215 aa).

The N-terminal stretch at 1 to 17 is a signal peptide; sequence MKKVLASATILSLMLVG. Positions 17-110 are disordered; sequence GCSNGGNDES…NKQQQSVQDN (94 aa). Cysteine 18 is lipidated: N-palmitoyl cysteine. The S-diacylglycerol cysteine moiety is linked to residue cysteine 18. Over residues 25 to 62 the composition is skewed to basic and acidic residues; sequence ESSHKDDSSKTEQKDKSSSQHDSKKDSKRNDTNNKQDN. 2 stretches are compositionally biased toward low complexity: residues 63-76 and 91-110; these read QENNTNKEQTNNQN and NSNGNSSDNQNKQQQSVQDN.

The protein resides in the cell membrane. This is an uncharacterized protein from Staphylococcus epidermidis (strain ATCC 35984 / DSM 28319 / BCRC 17069 / CCUG 31568 / BM 3577 / RP62A).